A 641-amino-acid chain; its full sequence is 1-phosphatidylinositol 4,5-bisphosphate phosphodiesterase zeta-1 (641 aa).

Positions 35–70 (CSYIHVKRIFKDNDRLKQGRITIEEFRAIYRILTHR) constitute an EF-hand domain. The 145-residue stretch at 155-299 (QDMTHPLNDY…LKFKVLVKNK (145 aa)) folds into the PI-PLC X-box domain. Active-site residues include H170 and H215. Residues 382-498 (LSDLVIYTKA…GYILKPHFLR (117 aa)) enclose the PI-PLC Y-box domain. The 125-residue stretch at 498–622 (RESESYFNPS…KGYRRVPLFS (125 aa)) folds into the C2 domain.

As to quaternary structure, interacts via its C2 domain with PtdIns(3)P and, to a lesser extent, PtdIns(5)P in vitro. Requires Ca(2+) as cofactor.

It localises to the nucleus. The protein resides in the cytoplasm. Its subcellular location is the perinuclear region. It catalyses the reaction a 1,2-diacyl-sn-glycero-3-phospho-(1D-myo-inositol-4,5-bisphosphate) + H2O = 1D-myo-inositol 1,4,5-trisphosphate + a 1,2-diacyl-sn-glycerol + H(+). The production of the second messenger molecules diacylglycerol (DAG) and inositol 1,4,5-trisphosphate (IP3) is mediated by activated phosphatidylinositol-specific phospholipase C enzymes. In vitro, hydrolyzes PtdIns(4,5)P2 in a Ca(2+)-dependent manner. Triggers intracellular Ca(2+) oscillations in oocytes solely during M phase and is involved in inducing oocyte activation and initiating embryonic development up to the blastocyst stage. Is therefore a strong candidate for the egg-activating soluble sperm factor that is transferred from the sperm into the egg cytoplasm following gamete membrane fusion. May exert an inhibitory effect on phospholipase-C-coupled processes that depend on calcium ions and protein kinase C, including CFTR trafficking and function. This is 1-phosphatidylinositol 4,5-bisphosphate phosphodiesterase zeta-1 from Macaca fascicularis (Crab-eating macaque).